Reading from the N-terminus, the 141-residue chain is UPF0102 protein BRADO0179 (141 aa).

The interval 1–24 (MAETDRATDKPAGAPKPAKTASPE) is disordered. Residues 10–19 (KPAGAPKPAK) are compositionally biased toward low complexity.

It belongs to the UPF0102 family.

The sequence is that of UPF0102 protein BRADO0179 from Bradyrhizobium sp. (strain ORS 278).